Consider the following 360-residue polypeptide: MSLSRINIGSFRNITSASLQPCDGLNLIYGQNGSGKTSILEAIYFLGMGRSFRSHLSQRVINNDDDKLTLFAHLIDADRDCKIGLRRHRSGEIEVKIDGEKVKRLSTLAETLPIQVITPESFSLLFEGPKARRQFIDWGAFHSDPHFYQAWVNTRKVLKQRNQLLRNQSSYNQIQFWDKELVRYAEQVTDIRNQYVDSLNVLLKGIIGVFLPRIDIKVSFTRGWDSKTDFAQLLENQYSRDLAAGNTGSGPHKADLRLRVGNLPAQDALSRGQLKLLVCALRIAQGKLLKQQLDKNSIYLVDDLPSELDAQHRQLLLQLLTETGAQIFVTAIDPQAIVDSLSSPPNRMFHVEQGLVTVIE.

Residue glycine 30 to threonine 37 participates in ATP binding.

The protein belongs to the RecF family.

It localises to the cytoplasm. The RecF protein is involved in DNA metabolism; it is required for DNA replication and normal SOS inducibility. RecF binds preferentially to single-stranded, linear DNA. It also seems to bind ATP. In Shewanella frigidimarina (strain NCIMB 400), this protein is DNA replication and repair protein RecF.